A 79-amino-acid chain; its full sequence is NADH-ubiquinone oxidoreductase chain 5 (79 aa).

2 helical membrane passes run T5–Y27 and V40–S57.

It belongs to the complex I subunit 5 family. In terms of assembly, core subunit of respiratory chain NADH dehydrogenase (Complex I) which is composed of 45 different subunits.

It localises to the mitochondrion inner membrane. It catalyses the reaction a ubiquinone + NADH + 5 H(+)(in) = a ubiquinol + NAD(+) + 4 H(+)(out). In terms of biological role, core subunit of the mitochondrial membrane respiratory chain NADH dehydrogenase (Complex I) which catalyzes electron transfer from NADH through the respiratory chain, using ubiquinone as an electron acceptor. Essential for the catalytic activity and assembly of complex I. This is NADH-ubiquinone oxidoreductase chain 5 (MT-ND5) from Macaca fascicularis (Crab-eating macaque).